The primary structure comprises 332 residues: MATDFKSLPVIDISRLLLKCDDPDMAEDVGVAEVVQQLDKACRDAGFFYVIGHGISEDVINKVREITREFFKLPYEEKLKIKMTPAAGYRGYQRIGENVTKGIPDIHEAIDCYREIKQGKYGDIGKVMEGPNQWPENPQEFKELMEEYIKLCTDLSRKILRGISLALAGSPYEFEGKMAGDPFWVMRLIGYPGAEFTNGQPENDIGCGAHTDYGLLTLVNQDDDKTALQVRNLGGEWISAIPIPGSFVCNIGDMLKILSNGVYESTLHRVINNSPQYRVCVAFFYETNFDAVVEPLDICKQKYPGGRGGCQVFKRAVYGEHLVSKVQTNFAM.

Positions 182–287 constitute a Fe2OG dioxygenase domain; the sequence is PFWVMRLIGY…RVCVAFFYET (106 aa). The Fe cation site is built by His210, Asp212, and His268. Arg278 contacts 2-oxoglutarate.

Belongs to the iron/ascorbate-dependent oxidoreductase family. It depends on Fe(2+) as a cofactor.

It is found in the cytoplasm. The protein localises to the cytosol. It carries out the reaction L-homoarginine + 2-oxoglutarate + O2 = 6-hydroxy-L-homoarginine + succinate + CO2. With respect to regulation, slightly inhibited by canavanine (Can), the 5-oxa-analog of arginine. Functionally, 2-oxoglutarate-dependent dioxygenase catalyzing homoarginine 6-hydroxylation thus producing 6-hydroxy-L-homoarginine. Guanidine (Gd) is in turn synthesized by the spontaneous conversion of 6-hydroxy-L-homoarginine to (S)-2-amino-6-oxohexanoate (RHEA:79843); guanidine is a nitrogen-rich compound that can serve as a defense or signaling substance. In Arabidopsis thaliana (Mouse-ear cress), this protein is Homoarginine-6-hydroxylase 2-ODD-C23.1.